We begin with the raw amino-acid sequence, 646 residues long: MLFVLELFSHYVLHFERYFILSRQSTLLIQWSIVVLAGLYLLVHHPKINRQRTMFLAGVILRIVLLAGVSVELIHQVQSTNFTSAYLREDGKELLPLLHFLLYGYVLLTAFHYMLMPRDHGGKGKFYTFDLAVVSLPIVQMIFSFFSYWKEYPDGMEPIAFVFLFFIITLPIALNVVFFKLYWRTDKILLGLFYTLIIGLLVLLLAPYPNQISKDYGAVMPYTIYLAMAGFLMSYHLFQKSGKVYVRVNKWVTMAVMVFFVLLLNPIYNIGTAAFAVSKPANVHDSFNFVGEHISSEKAEQILKSFFPTDETLYLHDTNMDVHYFYSFESKGYKAEVDEVSQLIRNYEYLQKAHGKKLTNQEYKRKSIAFLERHGRVLHKDHIETKVSQEDGQTVVRIYLKNQLHKKDHADDGAVFYWEKETLMGFSEDPSIYQLDSLLHVHITEQDIHDKVEQMFTALNISKQPYQITDIESDSLLGSMVRVETKVGIVLEFEGESGCLHSLSLPMKKNISMANSRLQHQILSIFDARGSEKKKKSSQGDMVMYTDSSKTYEFVEAQGQLNVYVYSDTPDQSFPYTYRNGTLAYEKVASLYQDVIYKKRMRPIIVQRGDERHYAWLIIIQPFGSNRHDAYVVDGETQEVKSLYES.

8 helical membrane passes run 20–42, 55–77, 97–115, 127–149, 159–181, 188–206, 216–238, and 251–273; these read ILSRQSTLLIQWSIVVLAGLYLL, FLAGVILRIVLLAGVSVELIHQV, LLHFLLYGYVLLTAFHYML, YTFDLAVVSLPIVQMIFSFFSYW, IAFVFLFFIITLPIALNVVFFKL, ILLGLFYTLIIGLLVLLLA, YGAVMPYTIYLAMAGFLMSYHLF, and WVTMAVMVFFVLLLNPIYNIGTA.

The protein resides in the cell membrane. This is an uncharacterized protein from Bacillus subtilis (strain 168).